The following is a 378-amino-acid chain: uncharacterized protein (378 aa).

This is an uncharacterized protein from Nostoc sp. (strain PCC 7120 / SAG 25.82 / UTEX 2576).